The sequence spans 1220 residues: Pesticidal crystal protein Cry5Ac (1220 aa).

The disordered stretch occupies residues 1194–1220; the sequence is PLPTDDQNSEGNTAFSTNSDTSMNNNQ. A compositionally biased stretch (polar residues) spans 1198 to 1220; sequence DDQNSEGNTAFSTNSDTSMNNNQ.

It belongs to the delta endotoxin family.

Functionally, promotes colloidosmotic lysis by binding to the midgut epithelial cells of hymenopteran species. The polypeptide is Pesticidal crystal protein Cry5Ac (cry5Ac) (Bacillus thuringiensis).